The primary structure comprises 147 residues: Large ribosomal subunit protein bL9 (147 aa).

It belongs to the bacterial ribosomal protein bL9 family.

Its function is as follows. Binds to the 23S rRNA. In Exiguobacterium sp. (strain ATCC BAA-1283 / AT1b), this protein is Large ribosomal subunit protein bL9.